The following is a 65-amino-acid chain: Small ribosomal subunit protein bS21 (65 aa).

It belongs to the bacterial ribosomal protein bS21 family.

In Aster yellows phytoplasma, this protein is Small ribosomal subunit protein bS21.